Here is a 112-residue protein sequence, read N- to C-terminus: Putative movement protein (112 aa).

Residues 27-47 (IGIIMLCIVGIVVLWVLIILC) form a helical membrane-spanning segment. Positions 77 to 112 (TGTPFEETGPHRERRWAERRTEATNQNNNDNVNRFS) are disordered. Residues 84–98 (TGPHRERRWAERRTE) show a composition bias toward basic and acidic residues. A compositionally biased stretch (polar residues) spans 101–112 (NQNNNDNVNRFS).

Belongs to the nanovirus movement protein family.

It is found in the host cell membrane. Functionally, may transport viral genome to neighboring plant cells directly through plasmosdesmata, without any budding. The movement protein allows efficient cell to cell propagation, by bypassing the host cell wall barrier. The chain is Putative movement protein (DNA-M) from Subterranean clover stunt virus (strain F) (SCSV).